The following is a 201-amino-acid chain: Small ribosomal subunit protein uS4 (201 aa).

One can recognise an S4 RNA-binding domain in the interval 91 to 154 (TRLDNVVYRA…RKMEWFEEAQ (64 aa)).

Belongs to the universal ribosomal protein uS4 family. As to quaternary structure, part of the 30S ribosomal subunit. Contacts protein S5. The interaction surface between S4 and S5 is involved in control of translational fidelity.

Its function is as follows. One of the primary rRNA binding proteins, it binds directly to 16S rRNA where it nucleates assembly of the body of the 30S subunit. In terms of biological role, with S5 and S12 plays an important role in translational accuracy. This Corynebacterium ammoniagenes (Brevibacterium ammoniagenes) protein is Small ribosomal subunit protein uS4.